Here is a 410-residue protein sequence, read N- to C-terminus: Tegument protein VP16 homolog (410 aa).

A disordered region spans residues 388–410 (PPSPSEILPGDPPRPPTCGFLTR).

This sequence belongs to the herpesviridae tegument protein VP16 protein family. Associates with the VP16-induced complex; binding to host HCFC1 activates VP16 for association with the octamer motif-binding host protein POU2F1, to form a multiprotein-DNA complex responsible for activating transcription of the viral immediate early genes.

The protein resides in the virion tegument. The protein localises to the host nucleus. In terms of biological role, transcriptional activator of immediate-early (IE) gene products (alpha genes). Acts as a key activator of lytic infection by initiating the lytic program through the assembly of the transcriptional regulatory VP16-induced complex composed of VP16 and two cellular factors, HCFC1 and POU2F 1. VP16-induced complex represents a regulatory switch: when it is on, it promotes IE-gene expression and thus lytic infection, and when it is off, it limits IE-gene transcription favoring latent infection. Functionally, may play a role in the aggregation of tegument proteins around nucleocapsids during virus morphogenesis. In Varicella-zoster virus (strain Oka vaccine) (HHV-3), this protein is Tegument protein VP16 homolog.